We begin with the raw amino-acid sequence, 379 residues long: Cytochrome b (379 aa).

A run of 4 helical transmembrane segments spans residues 33 to 53 (FGSL…FLAM), 77 to 98 (WLIR…YLHI), 113 to 133 (WNIG…GYVL), and 178 to 198 (FFAF…LHLL). 2 residues coordinate heme b: His-83 and His-97. Positions 182 and 196 each coordinate heme b. His-201 contacts a ubiquinone. Helical transmembrane passes span 226 to 246 (YKDL…ALFY), 288 to 308 (LGGV…PILH), 320 to 340 (ASQL…WIGG), and 347 to 367 (YIII…VLNP).

This sequence belongs to the cytochrome b family. In terms of assembly, the cytochrome bc1 complex contains 3 respiratory subunits (MT-CYB, CYC1 and UQCRFS1), 2 core proteins (UQCRC1 and UQCRC2) and probably 6 low-molecular weight proteins. Requires heme b as cofactor.

The protein localises to the mitochondrion inner membrane. In terms of biological role, component of the ubiquinol-cytochrome c reductase complex (complex III or cytochrome b-c1 complex) that is part of the mitochondrial respiratory chain. The b-c1 complex mediates electron transfer from ubiquinol to cytochrome c. Contributes to the generation of a proton gradient across the mitochondrial membrane that is then used for ATP synthesis. In Anguilla anguilla (European freshwater eel), this protein is Cytochrome b (mt-cyb).